The following is a 309-amino-acid chain: 4-hydroxy-tetrahydrodipicolinate synthase (309 aa).

T51 lines the pyruvate pocket. Catalysis depends on Y140, which acts as the Proton donor/acceptor. The active-site Schiff-base intermediate with substrate is K168. Residue I209 participates in pyruvate binding.

Belongs to the DapA family. In terms of assembly, homotetramer; dimer of dimers.

Its subcellular location is the cytoplasm. The enzyme catalyses L-aspartate 4-semialdehyde + pyruvate = (2S,4S)-4-hydroxy-2,3,4,5-tetrahydrodipicolinate + H2O + H(+). Its pathway is amino-acid biosynthesis; L-lysine biosynthesis via DAP pathway; (S)-tetrahydrodipicolinate from L-aspartate: step 3/4. Catalyzes the condensation of (S)-aspartate-beta-semialdehyde [(S)-ASA] and pyruvate to 4-hydroxy-tetrahydrodipicolinate (HTPA). The polypeptide is 4-hydroxy-tetrahydrodipicolinate synthase (Streptococcus uberis (strain ATCC BAA-854 / 0140J)).